Consider the following 21-residue polypeptide: Large ribosomal subunit protein uL29 (21 aa).

The protein belongs to the universal ribosomal protein uL29 family.

The sequence is that of Large ribosomal subunit protein uL29 (rpmC) from Brevundimonas diminuta (Pseudomonas diminuta).